The chain runs to 225 residues: MQTKKLNHAPKTGYMFTVTVKNMGITEYLTAWQAMKDFTQQRTRETPDEIWLLEHPPVYTQGIAGKPEHLLFPSNIPVIKTDRGGQITYHGPGQIIMYLLLDLHRWQLGIRQLVRKMEGAVINLMDEYDIVANGSQDAPGVYVNGAKIASLGLKIRRGACYHGIAFNADMDLAPFVAINPCGYPGLRVTQAKELGISDNKEVLAGKLAQNFIAQLTHRIITPHGR.

One can recognise a BPL/LPL catalytic domain in the interval 44–219; sequence RETPDEIWLL…NFIAQLTHRI (176 aa). Substrate-binding positions include 83–90, 150–152, and 163–165; these read RGGQITYH, SLG, and GIA. Cys181 serves as the catalytic Acyl-thioester intermediate.

Belongs to the LipB family.

The protein resides in the cytoplasm. The catalysed reaction is octanoyl-[ACP] + L-lysyl-[protein] = N(6)-octanoyl-L-lysyl-[protein] + holo-[ACP] + H(+). The protein operates within protein modification; protein lipoylation via endogenous pathway; protein N(6)-(lipoyl)lysine from octanoyl-[acyl-carrier-protein]: step 1/2. Functionally, catalyzes the transfer of endogenously produced octanoic acid from octanoyl-acyl-carrier-protein onto the lipoyl domains of lipoate-dependent enzymes. Lipoyl-ACP can also act as a substrate although octanoyl-ACP is likely to be the physiological substrate. In Nitrosomonas eutropha (strain DSM 101675 / C91 / Nm57), this protein is Octanoyltransferase.